The primary structure comprises 108 residues: Transmembrane protein 265 (108 aa).

The next 2 membrane-spanning stretches (helical) occupy residues 34 to 54 (AATSIICGCSCLGVMALVFAI) and 78 to 98 (LILASFAVWLAVLILGPLLLW).

The protein belongs to the CD225/Dispanin family.

Its subcellular location is the membrane. The protein is Transmembrane protein 265 of Homo sapiens (Human).